A 342-amino-acid chain; its full sequence is Ribosomal RNA small subunit methyltransferase H (342 aa).

Residues 43 to 45 (GGY), Asp-61, Phe-87, Asp-108, and Gln-115 each bind S-adenosyl-L-methionine. Positions 322-342 (ALDEASDGMNLPPLAELEKSR) are disordered.

It belongs to the methyltransferase superfamily. RsmH family.

It localises to the cytoplasm. It carries out the reaction cytidine(1402) in 16S rRNA + S-adenosyl-L-methionine = N(4)-methylcytidine(1402) in 16S rRNA + S-adenosyl-L-homocysteine + H(+). In terms of biological role, specifically methylates the N4 position of cytidine in position 1402 (C1402) of 16S rRNA. The protein is Ribosomal RNA small subunit methyltransferase H of Hyphomonas neptunium (strain ATCC 15444).